The sequence spans 129 residues: Small ribosomal subunit protein uS8 (129 aa).

Belongs to the universal ribosomal protein uS8 family. In terms of assembly, part of the 30S ribosomal subunit.

Its function is as follows. One of the primary rRNA binding proteins, it binds directly to 16S rRNA central domain where it helps coordinate assembly of the platform of the 30S subunit. This chain is Small ribosomal subunit protein uS8, found in Thermofilum pendens (strain DSM 2475 / Hrk 5).